The chain runs to 424 residues: Elongation factor 1-alpha (424 aa).

Residues 5–223 (KPHLNLITIG…DAFKVPEKPI (219 aa)) form the tr-type G domain. Positions 14 to 21 (GHVDHGKS) are G1. Residue 14-21 (GHVDHGKS) coordinates GTP. Ser21 provides a ligand contact to Mg(2+). The interval 70 to 74 (GVTID) is G2. The segment at 91–94 (DAPG) is G3. GTP contacts are provided by residues 91-95 (DAPGH) and 148-151 (NKMD). The interval 148-151 (NKMD) is G4. The segment at 187–189 (SGY) is G5.

It belongs to the TRAFAC class translation factor GTPase superfamily. Classic translation factor GTPase family. EF-Tu/EF-1A subfamily.

The protein resides in the cytoplasm. The catalysed reaction is GTP + H2O = GDP + phosphate + H(+). Functionally, GTP hydrolase that promotes the GTP-dependent binding of aminoacyl-tRNA to the A-site of ribosomes during protein biosynthesis. The polypeptide is Elongation factor 1-alpha (Thermoplasma volcanium (strain ATCC 51530 / DSM 4299 / JCM 9571 / NBRC 15438 / GSS1)).